Reading from the N-terminus, the 528-residue chain is Atypical kinase COQ8B, mitochondrial (528 aa).

The helical transmembrane segment at 93 to 109 (LASFGGLAVGLGLGALA) threads the bilayer. The short motif at 151 to 154 (KIGQ) is the KxGQ motif element. Residues 187–419 (MMKVLEEELG…DRVLQKSQDL (233 aa)) enclose the Protein kinase domain. Residues 212 to 215 (AAAS) carry the AAAS motif motif. ATP contacts are provided by residues serine 215, lysine 233, and 320–323 (MELA). The Proton acceptor role is filled by aspartate 363. Residues asparagine 368 and aspartate 382 each coordinate ATP.

It belongs to the protein kinase superfamily. ADCK protein kinase family. Homodimer; homodimerizes via its transmembrane region. Interacts with COQ6 and COQ7. Interacts with the multi-subunit COQ enzyme complex, composed of at least COQ3, COQ4, COQ5, COQ6, COQ7 and COQ9. In terms of tissue distribution, in the kidney, expressed in glomeruli, predominantly in podocyte foot precesses, as well as in proximal tubules and collecting ducts (at protein level).

It localises to the mitochondrion membrane. The protein localises to the cytoplasm. The protein resides in the cytosol. It is found in the cell membrane. Its pathway is cofactor biosynthesis; ubiquinone biosynthesis. Atypical kinase involved in the biosynthesis of coenzyme Q, also named ubiquinone, an essential lipid-soluble electron transporter for aerobic cellular respiration. Its substrate specificity is still unclear: may act as a protein kinase that mediates phosphorylation of COQ3. According to other reports, acts as a small molecule kinase, possibly a lipid kinase that phosphorylates a prenyl lipid in the ubiquinone biosynthesis pathway, as suggested by its ability to bind coenzyme Q lipid intermediates. However, the small molecule kinase activity was not confirmed by another publication. Required for podocyte migration. The protein is Atypical kinase COQ8B, mitochondrial of Rattus norvegicus (Rat).